The following is a 104-amino-acid chain: Large ribosomal subunit protein uL24 (104 aa).

This sequence belongs to the universal ribosomal protein uL24 family. Part of the 50S ribosomal subunit.

Its function is as follows. One of two assembly initiator proteins, it binds directly to the 5'-end of the 23S rRNA, where it nucleates assembly of the 50S subunit. Functionally, one of the proteins that surrounds the polypeptide exit tunnel on the outside of the subunit. The chain is Large ribosomal subunit protein uL24 from Shewanella loihica (strain ATCC BAA-1088 / PV-4).